We begin with the raw amino-acid sequence, 438 residues long: Plasmalemma vesicle-associated protein (438 aa).

The Cytoplasmic segment spans residues 1-26; sequence MGLSMDRSPYSRTGDRDRGCWYYLRY. A helical; Signal-anchor for type II membrane protein transmembrane segment spans residues 27–47; it reads FFLFVSLIQFLIILGLVLFMI. Over 48–438 the chain is Extracellular; sequence YGNVHATTES…LVNPAVPPSG (391 aa). 4 N-linked (GlcNAc...) asparagine glycosylation sites follow: Asn82, Asn88, Asn112, and Asn150. A coiled-coil region spans residues 289-383; the sequence is AGIERVTREN…TEVDVRISAL (95 aa). The segment at 393 to 438 is disordered; that stretch reads PAIQPRLPGPPPNPPPIDPASLEEFKKRILESQRPPLVNPAVPPSG. Pro residues-rich tracts occupy residues 399–410 and 429–438; these read LPGPPPNPPPID and LVNPAVPPSG.

As to quaternary structure, homodimer. As to expression, expressed in lung (alveolar endothelial and bronchial epithelial cells), kidney (endothelium of peritubular capillaries), spleen, liver, adrenal (endothelial cells of the zona reticularis of the cortex and chromaffin cells in the medulla), pancreas (islets of Langerhans), testis (germ cells, interstitial cells in neonatal testis and spermatids), ovary (stromal endothelial, thecal layer of developing follicles, luteal cells within the corpus luteum), intestine (endothelium of capillaries of the intestinal villi) and pituitary (pituicyte cells in the neural lobe) (at protein level). Expressed in lung, kidney, spleen, liver, adrenal, testis, heart, muscle, pituitary, thyroid and ovary.

The protein resides in the cell membrane. It is found in the membrane. Its subcellular location is the caveola. The protein localises to the cytoplasm. It localises to the perinuclear region. In terms of biological role, endothelial cell-specific membrane protein involved in the formation of the diaphragms that bridge endothelial fenestrae. It is also required for the formation of stomata of caveolae and transendothelial channels. Functions in microvascular permeability, endothelial fenestrae contributing to the passage of water and solutes and regulating transcellular versus paracellular flow in different organs. Plays a specific role in embryonic development. This Rattus norvegicus (Rat) protein is Plasmalemma vesicle-associated protein (Plvap).